A 229-amino-acid chain; its full sequence is Coiled-coil domain-containing protein 134 (229 aa).

A signal peptide spans 1 to 22; that stretch reads MDPVQLLSFLLALLLPLGTALD. A coiled-coil region spans residues 192–218; sequence NTDAFQKALREEEKRRRKEEKRKEIRK. A disordered region spans residues 201–229; sequence REEEKRRRKEEKRKEIRKGPRITRSRSEL. Residues 219–229 are compositionally biased toward basic residues; the sequence is GPRITRSRSEL. The Prevents secretion from ER signature appears at 226–229; the sequence is RSEL.

This sequence belongs to the CCDC134 family.

The protein resides in the endoplasmic reticulum lumen. Molecular adapter required to prevent protein hyperglycosylation of HSP90B1: during translation, associates with nascent HSP90B1 and the STT3A catalytic component of the OST-A complex and tethers them to a specialized translocon that forms a microenvironment for HSP90B1 folding. In the CCDC134-containing translocon, STT3A associates with the SRT pseudosubstrate motif of HSP90B1, preventing access to facultative glycosylation sites until folding is completed, preventing hyperglycosylation and subsequent degradation of HSP90B1. This chain is Coiled-coil domain-containing protein 134 (ccdc134), found in Xenopus tropicalis (Western clawed frog).